An 800-amino-acid polypeptide reads, in one-letter code: Protein PET111, mitochondrial (800 aa).

The protein to yeast YHR160C.

The protein resides in the mitochondrion matrix. Functionally, required for translation of the mitochondrial gene for cytochrome c oxidase subunit II (COX2). The chain is Protein PET111, mitochondrial (PET111) from Saccharomyces cerevisiae (strain ATCC 204508 / S288c) (Baker's yeast).